The following is a 156-amino-acid chain: Small ribosomal subunit protein uS7 (156 aa).

This sequence belongs to the universal ribosomal protein uS7 family. As to quaternary structure, part of the 30S ribosomal subunit. Contacts proteins S9 and S11.

One of the primary rRNA binding proteins, it binds directly to 16S rRNA where it nucleates assembly of the head domain of the 30S subunit. Is located at the subunit interface close to the decoding center, probably blocks exit of the E-site tRNA. This is Small ribosomal subunit protein uS7 from Mycolicibacterium gilvum (strain PYR-GCK) (Mycobacterium gilvum (strain PYR-GCK)).